Consider the following 668-residue polypeptide: Packaging protein UL32 homolog (668 aa).

A compositionally biased stretch (polar residues) spans 1–10; sequence MNPSTHVSSN. The segment at 1 to 35 is disordered; sequence MNPSTHVSSNGPTTPPHGPHTTFLPPTSPAPSTSS. Residues 19–35 show a composition bias toward low complexity; the sequence is PHTTFLPPTSPAPSTSS. Cys200, Cys203, His276, and Cys282 together coordinate Zn(2+). Positions 200 to 282 are zinc finger 1; sequence CNLCAIISIC…FHLHFFINRC (83 aa). The tract at residues 401-430 is disordered; that stretch reads IEEEEDEEGGEKGGDDPGRHNGGGTSGGFS. Over residues 410–419 the composition is skewed to basic and acidic residues; sequence GEKGGDDPGR. Positions 459, 462, 567, and 574 each coordinate Zn(2+). Residues 459–574 form a zinc finger 2 region; that stretch reads CLLCELMACS…YKHFFCDPQC (116 aa).

The protein belongs to the herpesviridae UL32 protein family.

It localises to the host cytoplasm. The protein resides in the host nucleus. Functionally, plays a role in efficient localization of neo-synthesized capsids to nuclear replication compartments, thereby controlling cleavage and packaging of virus genomic DNA. The chain is Packaging protein UL32 homolog (UL52) from Homo sapiens (Human).